Consider the following 132-residue polypeptide: Large ribosomal subunit protein bL17 (132 aa).

The protein belongs to the bacterial ribosomal protein bL17 family. In terms of assembly, part of the 50S ribosomal subunit. Contacts protein L32.

This chain is Large ribosomal subunit protein bL17, found in Marinobacter nauticus (strain ATCC 700491 / DSM 11845 / VT8) (Marinobacter aquaeolei).